The chain runs to 132 residues: Holo-[acyl-carrier-protein] synthase (132 aa).

Residues Asp8 and Glu64 each contribute to the Mg(2+) site.

This sequence belongs to the P-Pant transferase superfamily. AcpS family. It depends on Mg(2+) as a cofactor.

It is found in the cytoplasm. The enzyme catalyses apo-[ACP] + CoA = holo-[ACP] + adenosine 3',5'-bisphosphate + H(+). Functionally, transfers the 4'-phosphopantetheine moiety from coenzyme A to a Ser of acyl-carrier-protein. In Shewanella sediminis (strain HAW-EB3), this protein is Holo-[acyl-carrier-protein] synthase.